The sequence spans 219 residues: MKKTLVASSLAIGLGVVAGNAGHDAHASETTNVDKAELAQKALTNDQSLNESPVQEGAYNINFDYNGNSYHFESDGSTWSWSYESTNNATQPVQPSQSQVATQQQPVQVSAPQNEQTAQPQTKSTSTSQTSSSKASSGSSVNVNSHLQQIAQRESGGDIHAINPSSGAAGKYQFLQSTWDSVAPSQYKGVSPAKAPESVQDRAAVKLYNTGGPGHWVTA.

The first 27 residues, 1 to 27 (MKKTLVASSLAIGLGVVAGNAGHDAHA), serve as a signal peptide directing secretion. Positions 86 to 143 (TNNATQPVQPSQSQVATQQQPVQVSAPQNEQTAQPQTKSTSTSQTSSSKASSGSSVNV) are disordered. Low complexity predominate over residues 89–140 (ATQPVQPSQSQVATQQQPVQVSAPQNEQTAQPQTKSTSTSQTSSSKASSGSS).

This sequence belongs to the transglycosylase family. SceD subfamily.

It is found in the secreted. Is able to cleave peptidoglycan and affects clumping and separation of bacterial cells. The chain is Probable transglycosylase SceD (sceD) from Staphylococcus epidermidis (strain ATCC 35984 / DSM 28319 / BCRC 17069 / CCUG 31568 / BM 3577 / RP62A).